The chain runs to 178 residues: NADH-quinone oxidoreductase subunit I (178 aa).

4Fe-4S ferredoxin-type domains follow at residues 45–74 (RHPD…VEAA) and 90–119 (KVYE…LGNE). Residues cysteine 54, cysteine 57, cysteine 60, cysteine 64, cysteine 99, cysteine 102, cysteine 105, and cysteine 109 each contribute to the [4Fe-4S] cluster site.

It belongs to the complex I 23 kDa subunit family. In terms of assembly, NDH-1 is composed of 15 different subunits. Subunits NuoA, H, J, K, L, M, N constitute the membrane sector of the complex. Requires [4Fe-4S] cluster as cofactor.

The protein resides in the cell membrane. It catalyses the reaction a quinone + NADH + 5 H(+)(in) = a quinol + NAD(+) + 4 H(+)(out). Functionally, NDH-1 shuttles electrons from NADH, via FMN and iron-sulfur (Fe-S) centers, to quinones in the respiratory chain. The immediate electron acceptor for the enzyme in this species is believed to be ubiquinone. Couples the redox reaction to proton translocation (for every two electrons transferred, four hydrogen ions are translocated across the cytoplasmic membrane), and thus conserves the redox energy in a proton gradient. The chain is NADH-quinone oxidoreductase subunit I from Deinococcus radiodurans (strain ATCC 13939 / DSM 20539 / JCM 16871 / CCUG 27074 / LMG 4051 / NBRC 15346 / NCIMB 9279 / VKM B-1422 / R1).